The chain runs to 310 residues: Putative S-adenosyl-L-methionine-dependent methyltransferase MSMEG_1888/MSMEI_1848 (310 aa).

Residues Asp-128 and 157–158 (DL) each bind S-adenosyl-L-methionine.

It belongs to the UPF0677 family.

Its function is as follows. Exhibits S-adenosyl-L-methionine-dependent methyltransferase activity. The sequence is that of Putative S-adenosyl-L-methionine-dependent methyltransferase MSMEG_1888/MSMEI_1848 from Mycolicibacterium smegmatis (strain ATCC 700084 / mc(2)155) (Mycobacterium smegmatis).